The sequence spans 539 residues: Glucans biosynthesis protein D (539 aa).

A signal peptide (tat-type signal) is located at residues 1–31 (MHRRNLLKASMALAAYTGLSASGLLAARAWA).

The protein belongs to the OpgD/OpgG family. Predicted to be exported by the Tat system. The position of the signal peptide cleavage has not been experimentally proven.

It is found in the periplasm. It functions in the pathway glycan metabolism; osmoregulated periplasmic glucan (OPG) biosynthesis. In terms of biological role, probably involved in the control of the structural glucose backbone of osmoregulated periplasmic glucans (OPGs). The sequence is that of Glucans biosynthesis protein D from Pseudomonas fluorescens (strain ATCC BAA-477 / NRRL B-23932 / Pf-5).